A 577-amino-acid polypeptide reads, in one-letter code: Outer spore wall assembly protein SHE10 (577 aa).

An N-terminal signal peptide occupies residues 1 to 23; sequence MGKLIKLITTLTVLVSLLQYCCE. Coiled coils occupy residues 379–416 and 513–561; these read NETR…ENVE and ILRS…EEDV. A compositionally biased stretch (basic and acidic residues) spans 525–545; it reads RERKERERKEREKAAAEEFQR. Residues 525 to 577 are disordered; sequence RERKERERKEREKAAAEEFQRQQELLLQQEEEDEEDVSYTSTSTITTTTTMTL. A compositionally biased stretch (low complexity) spans 562 to 577; that stretch reads SYTSTSTITTTTTMTL.

The protein belongs to the SHE10 family. As to quaternary structure, component of the mitochondria-localized RNase mitochondrial RNA-processing (RNase MRP) composed of one single RNA encoded by the NME1 gene and at least 31 proteins. Absent in the nucleus-localized RNase MRP (NuMRP).

It is found in the mitochondrion. In terms of biological role, involved in spore wall assembly. May be a component of the mitochondrial RNase MRP (MtMRP), a ribonucleoprotein endoribonuclease involved in the cleaving RNA transcripts to generate primers for DNA replication in mitochondria. The protein is Outer spore wall assembly protein SHE10 of Saccharomyces cerevisiae (strain JAY291) (Baker's yeast).